We begin with the raw amino-acid sequence, 222 residues long: Peroxiredoxin (222 aa).

The Thioredoxin domain maps to 2-157 (VVLGQKFPEV…ILRLVEALQT (156 aa)). The Cysteine sulfenic acid (-SOH) intermediate role is filled by cysteine 44. A substrate-binding site is contributed by arginine 120. The cysteines at positions 211 and 217 are disulfide-linked.

It belongs to the peroxiredoxin family. Prx6 subfamily. Homodecamer. Pentamer of dimers that assemble into a ring structure.

The protein resides in the cytoplasm. It catalyses the reaction a hydroperoxide + [thioredoxin]-dithiol = an alcohol + [thioredoxin]-disulfide + H2O. Its function is as follows. Thiol-specific peroxidase that catalyzes the reduction of hydrogen peroxide and organic hydroperoxides to water and alcohols, respectively. Plays a role in cell protection against oxidative stress by detoxifying peroxides. The polypeptide is Peroxiredoxin (Nanoarchaeum equitans (strain Kin4-M)).